The chain runs to 354 residues: Mycothiol acetyltransferase (354 aa).

A compositionally biased stretch (polar residues) spans 1 to 18 (MMVDNQTPDSSTLSTAST). Residues 1 to 21 (MMVDNQTPDSSTLSTASTPVY) form a disordered region. 2 N-acetyltransferase domains span residues 21 to 176 (YAEP…QTRE) and 191 to 354 (LRMR…EPAA). Residue glutamate 52 coordinates 1D-myo-inositol 2-(L-cysteinylamino)-2-deoxy-alpha-D-glucopyranoside. Residue 101–103 (AAV) coordinates acetyl-CoA. Glutamate 217, lysine 259, and glutamate 274 together coordinate 1D-myo-inositol 2-(L-cysteinylamino)-2-deoxy-alpha-D-glucopyranoside. Acetyl-CoA is bound by residues 278-280 (VGV) and 285-291 (QGGGLGR). Tyrosine 318 contributes to the 1D-myo-inositol 2-(L-cysteinylamino)-2-deoxy-alpha-D-glucopyranoside binding site.

The protein belongs to the acetyltransferase family. MshD subfamily. In terms of assembly, monomer.

It carries out the reaction 1D-myo-inositol 2-(L-cysteinylamino)-2-deoxy-alpha-D-glucopyranoside + acetyl-CoA = mycothiol + CoA + H(+). Catalyzes the transfer of acetyl from acetyl-CoA to desacetylmycothiol (Cys-GlcN-Ins) to form mycothiol. The sequence is that of Mycothiol acetyltransferase from Rothia mucilaginosa (strain DY-18) (Stomatococcus mucilaginosus).